The sequence spans 498 residues: Guanosine-5'-triphosphate,3'-diphosphate pyrophosphatase (498 aa).

Belongs to the GppA/Ppx family. GppA subfamily.

It carries out the reaction guanosine 3'-diphosphate 5'-triphosphate + H2O = guanosine 3',5'-bis(diphosphate) + phosphate + H(+). The protein operates within purine metabolism; ppGpp biosynthesis; ppGpp from GTP: step 2/2. Its function is as follows. Catalyzes the conversion of pppGpp to ppGpp. Guanosine pentaphosphate (pppGpp) is a cytoplasmic signaling molecule which together with ppGpp controls the 'stringent response', an adaptive process that allows bacteria to respond to amino acid starvation, resulting in the coordinated regulation of numerous cellular activities. This is Guanosine-5'-triphosphate,3'-diphosphate pyrophosphatase from Pectobacterium atrosepticum (strain SCRI 1043 / ATCC BAA-672) (Erwinia carotovora subsp. atroseptica).